A 355-amino-acid polypeptide reads, in one-letter code: UDP-N-acetylglucosamine--N-acetylmuramyl-(pentapeptide) pyrophosphoryl-undecaprenol N-acetylglucosamine transferase (355 aa).

UDP-N-acetyl-alpha-D-glucosamine is bound by residues 15–17 (TGG), N127, R163, S191, I244, 263–268 (ALTVSE), and Q288.

Belongs to the glycosyltransferase 28 family. MurG subfamily.

Its subcellular location is the cell inner membrane. It carries out the reaction di-trans,octa-cis-undecaprenyl diphospho-N-acetyl-alpha-D-muramoyl-L-alanyl-D-glutamyl-meso-2,6-diaminopimeloyl-D-alanyl-D-alanine + UDP-N-acetyl-alpha-D-glucosamine = di-trans,octa-cis-undecaprenyl diphospho-[N-acetyl-alpha-D-glucosaminyl-(1-&gt;4)]-N-acetyl-alpha-D-muramoyl-L-alanyl-D-glutamyl-meso-2,6-diaminopimeloyl-D-alanyl-D-alanine + UDP + H(+). It participates in cell wall biogenesis; peptidoglycan biosynthesis. In terms of biological role, cell wall formation. Catalyzes the transfer of a GlcNAc subunit on undecaprenyl-pyrophosphoryl-MurNAc-pentapeptide (lipid intermediate I) to form undecaprenyl-pyrophosphoryl-MurNAc-(pentapeptide)GlcNAc (lipid intermediate II). The sequence is that of UDP-N-acetylglucosamine--N-acetylmuramyl-(pentapeptide) pyrophosphoryl-undecaprenol N-acetylglucosamine transferase from Photorhabdus laumondii subsp. laumondii (strain DSM 15139 / CIP 105565 / TT01) (Photorhabdus luminescens subsp. laumondii).